The sequence spans 95 residues: Alpha-bungarotoxin, isoform A31 (95 aa).

The N-terminal stretch at 1-21 (MKTLLLTLVVVTIVCLDLGYT) is a signal peptide. 5 disulfide bridges follow: cysteine 24/cysteine 44, cysteine 37/cysteine 65, cysteine 50/cysteine 54, cysteine 69/cysteine 80, and cysteine 81/cysteine 86.

This sequence belongs to the three-finger toxin family. Long-chain subfamily. Type II alpha-neurotoxin sub-subfamily. As to quaternary structure, monomer in solution, homodimer in crystal state. As to expression, expressed by the venom gland.

Its subcellular location is the secreted. In terms of biological role, binds with high affinity to muscular (tested on Torpedo marmorata, Kd=0.4 nM) and neuronal (tested on chimeric alpha-7/CHRNA7, Kd=0.95 nM) nicotinic acetylcholine receptor (nAChR) and inhibits acetylcholine from binding to the receptor, thereby impairing neuromuscular and neuronal transmission. It also shows an activity on GABA(A) receptors. It antagonises GABA-activated currents with high potency when tested on primary hippocampal neurons. It inhibits recombinantly expressed GABA(A) receptors composed of alpha-2-beta-2-gamma-2 (GABRA2-GABRB2-GABRG2) subunits with high potency (62.3% inhibition at 20 uM of toxin). It also shows a weaker inhibition on GABA(A) receptors composed of alpha-1-beta-2-gamma-2 (GABRA1-GABRB2-GABRG2) subunits, alpha-4-beta-2-gamma-2 (GABRA4-GABRB2-GABRG2) subunits, and alpha-5-beta-2-gamma-2 (GABRA5-GABRB2-GABRG2) subunits. A very weak inhibition is also observed on GABA(A) receptor composed of alpha-1-beta-3-gamma-2 (GABRA1-GABRB3-GABRG2). It has also been shown to bind and inhibit recombinant GABA(A) receptor beta-3/GABRB3 subunit (Kd=about 50 nM). In addition, it blocks the extracellular increase of dopamine evoked by nicotine only at the higher dose (4.2 uM). In vivo, when intraperitoneally injected into mice, induces flaccid paralysis of the limbs and respiratory distress, and causes death in a dose-dependent manner. The chain is Alpha-bungarotoxin, isoform A31 from Bungarus candidus (Malayan krait).